We begin with the raw amino-acid sequence, 1226 residues long: Probable phosphorylase b kinase regulatory subunit alpha (1226 aa).

The disordered stretch occupies residues 666 to 688 (NEKITTPRGPRTLRRGESVKDRS). The segment covering 679-688 (RRGESVKDRS) has biased composition (basic and acidic residues).

This sequence belongs to the phosphorylase b kinase regulatory chain family.

Its pathway is glycan biosynthesis; glycogen metabolism. Phosphorylase b kinase catalyzes the phosphorylation of serine in certain substrates, including troponin I. The alpha chain may bind calmodulin. This is Probable phosphorylase b kinase regulatory subunit alpha from Caenorhabditis elegans.